The sequence spans 690 residues: Elongation factor G (690 aa).

Residues 8 to 283 (EDYRNFGIMA…AVVDYLPSPI (276 aa)) enclose the tr-type G domain. GTP contacts are provided by residues 17–24 (AHIDAGKT), 81–85 (DTPGH), and 135–138 (NKMD).

It belongs to the TRAFAC class translation factor GTPase superfamily. Classic translation factor GTPase family. EF-G/EF-2 subfamily.

The protein resides in the cytoplasm. Its function is as follows. Catalyzes the GTP-dependent ribosomal translocation step during translation elongation. During this step, the ribosome changes from the pre-translocational (PRE) to the post-translocational (POST) state as the newly formed A-site-bound peptidyl-tRNA and P-site-bound deacylated tRNA move to the P and E sites, respectively. Catalyzes the coordinated movement of the two tRNA molecules, the mRNA and conformational changes in the ribosome. In Bradyrhizobium diazoefficiens (strain JCM 10833 / BCRC 13528 / IAM 13628 / NBRC 14792 / USDA 110), this protein is Elongation factor G.